Reading from the N-terminus, the 184-residue chain is TATA-box-binding protein (184 aa).

A run of 2 repeats spans residues isoleucine 9 to leucine 85 and valine 100 to leucine 178.

Belongs to the TBP family.

Its function is as follows. General factor that plays a role in the activation of archaeal genes transcribed by RNA polymerase. Binds specifically to the TATA box promoter element which lies close to the position of transcription initiation. This chain is TATA-box-binding protein (tbp), found in Thermoplasma acidophilum (strain ATCC 25905 / DSM 1728 / JCM 9062 / NBRC 15155 / AMRC-C165).